Reading from the N-terminus, the 621-residue chain is MSEATWWYRGGTSKHDLHYRREAEVNTTLEELLLYFIFLINLCILTFGMVNPHMYYLNKVMSSLFVDTSLPDDERSSFRSIRSITEFWKFMEGPLIDGLYWDSWYGNKQLYSVKNSSRIYYENVLLGIPRVRQLRVRNNTCKVYPAFQSLVSDCYSKYTVENEDFSDFGLKRNPEWTHTPSSRTAPWHWGFVGVYRDGGYIVTLSKSKSETKAKFVDLRLNNWISRGTRAVFIDFSLYNANVNLFCIIRLLAEFPATGGLLTSWQFYSVKLLRYVSYYDYFIASCEVIFCIFLFVFIIQELRKVNEFKSAYFRSVWNWLEMLLLLLCFLAVSFYAYCNMQSFLLLGQLLKNTDSYPDFYFLAYWHIYYNNVIAITIFFAWIKIFKFISFNETMSQLSSTLSRCMKDIVGFAIMFFIIFSAYAQLGFLVFGSQVDDFSTFQNSIFAQFRIVLGDFNFAGIQQANWILGPIYFITFIFFVFFVLLNMFLAIINDTYSEVKADYSIGRRPDFELGKIIQKSCFNVLEKLRLKKAQAKEEKKMQTTDLAQRARRDGFDESEIQEAEQMKRWKERLEKKYYSTEIQDDYQPVTQQEFRELFLYAVELEKELHYVSLKLNQLMRKLH.

The Cytoplasmic portion of the chain corresponds to Met-1–Glu-31. The helical transmembrane segment at Leu-32–Pro-52 threads the bilayer. At His-53–Tyr-277 the chain is on the extracellular side. Asn-115 and Asn-138 each carry an N-linked (GlcNAc...) asparagine glycan. The helical transmembrane segment at Tyr-278–Ile-298 threads the bilayer. Residues Gln-299–Ser-314 lie on the Cytoplasmic side of the membrane. The chain crosses the membrane as a helical span at residues Val-315–Ala-335. The Extracellular portion of the chain corresponds to Tyr-336–Phe-360. Residues Leu-361 to Ile-381 form a helical membrane-spanning segment. The Cytoplasmic segment spans residues Lys-382–Asp-406. Residues Ile-407 to Leu-427 form a helical membrane-spanning segment. At Val-428–Pro-468 the chain is on the extracellular side. Residues Ile-469–Ile-489 traverse the membrane as a helical segment. Residues Ile-490–His-621 are Cytoplasmic-facing. Residues Asn-521–Asp-551 are a coiled coil.

Belongs to the polycystin family. In terms of assembly, interacts with TRPC1 and TRPC5. Expressed only in testis and heart.

It localises to the membrane. Exhibits a lower single conductance but no spontaneous channel activity. May function as a regulator of calcium channels or a channel component involving Ca2(+) homeostasis. This is Polycystin-2-like protein 2 from Mus musculus (Mouse).